The sequence spans 200 residues: Holliday junction resolvase RecU (200 aa).

The tract at residues 1 to 25 (MTIRYPNGKRYNQASQPHKTPIKKH) is disordered. Threonine 85, aspartate 87, glutamate 100, and glutamine 119 together coordinate Mg(2+).

The protein belongs to the RecU family. The cofactor is Mg(2+).

The protein resides in the cytoplasm. It catalyses the reaction Endonucleolytic cleavage at a junction such as a reciprocal single-stranded crossover between two homologous DNA duplexes (Holliday junction).. Functionally, endonuclease that resolves Holliday junction intermediates in genetic recombination. Cleaves mobile four-strand junctions by introducing symmetrical nicks in paired strands. Promotes annealing of linear ssDNA with homologous dsDNA. Required for DNA repair, homologous recombination and chromosome segregation. The sequence is that of Holliday junction resolvase RecU from Bacillus cereus (strain ZK / E33L).